A 396-amino-acid polypeptide reads, in one-letter code: Acetate kinase (396 aa).

N7 serves as a coordination point for Mg(2+). K14 is a binding site for ATP. R91 is a binding site for substrate. The active-site Proton donor/acceptor is the D148. Residues 208-212 (HLGNG), 283-285 (DFR), and 331-335 (GLGEN) contribute to the ATP site. Position 384 (E384) interacts with Mg(2+).

The protein belongs to the acetokinase family. In terms of assembly, homodimer. Mg(2+) serves as cofactor. Requires Mn(2+) as cofactor.

The protein localises to the cytoplasm. The enzyme catalyses acetate + ATP = acetyl phosphate + ADP. It participates in metabolic intermediate biosynthesis; acetyl-CoA biosynthesis; acetyl-CoA from acetate: step 1/2. Its function is as follows. Catalyzes the formation of acetyl phosphate from acetate and ATP. Can also catalyze the reverse reaction. The sequence is that of Acetate kinase from Alkaliphilus metalliredigens (strain QYMF).